The sequence spans 282 residues: Bifunctional protein FolD (282 aa).

NADP(+)-binding positions include 165 to 167, Ser190, and Ile231; that span reads NRS.

It belongs to the tetrahydrofolate dehydrogenase/cyclohydrolase family. As to quaternary structure, homodimer.

The enzyme catalyses (6R)-5,10-methylene-5,6,7,8-tetrahydrofolate + NADP(+) = (6R)-5,10-methenyltetrahydrofolate + NADPH. It carries out the reaction (6R)-5,10-methenyltetrahydrofolate + H2O = (6R)-10-formyltetrahydrofolate + H(+). It functions in the pathway one-carbon metabolism; tetrahydrofolate interconversion. Catalyzes the oxidation of 5,10-methylenetetrahydrofolate to 5,10-methenyltetrahydrofolate and then the hydrolysis of 5,10-methenyltetrahydrofolate to 10-formyltetrahydrofolate. The sequence is that of Bifunctional protein FolD from Clostridium botulinum (strain Okra / Type B1).